A 561-amino-acid chain; its full sequence is Transmembrane protein 209 (561 aa).

2 positions are modified to phosphoserine: S9 and S11. The chain crosses the membrane as a helical span at residues 28–48; the sequence is VVLAWGLLNVSMAGMIYTEMT. N57 carries an N-linked (GlcNAc...) asparagine glycan. The helical transmembrane segment at 60–80 threads the bilayer; sequence YWPLWYIELALASLFSLNALF. A Phosphoserine modification is found at S98. Disordered stretches follow at residues 120–156 and 196–233; these read LAATQISPSPPSPSIQGQSVLSYSPSRSPSTSPKFAT and SLSPSSPYPTTVGPVESSGLRARYRSPPTAYNSPTDKE. The segment covering 138 to 152 has biased composition (low complexity); it reads SVLSYSPSRSPSTSP. Residues S201 and S248 each carry the phosphoserine modification. The interval 250–270 is disordered; that stretch reads EEKQHRVKLGSPDSTSPSTSP. Low complexity predominate over residues 260–270; sequence SPDSTSPSTSP. A glycan (N-linked (GlcNAc...) asparagine) is linked at N274. A Phosphoserine modification is found at S278.

As to quaternary structure, interacts with NUP205.

It is found in the membrane. It localises to the nucleus envelope. The protein resides in the golgi apparatus. The protein localises to the cytoplasm. Its function is as follows. Nuclear envelope protein which in association with NUP205, may be involved in nuclear transport of various nuclear proteins in addition to MYC. The chain is Transmembrane protein 209 (Tmem209) from Rattus norvegicus (Rat).